Reading from the N-terminus, the 183-residue chain is Ribosome-recycling factor (183 aa).

The protein belongs to the RRF family.

Its subcellular location is the cytoplasm. Responsible for the release of ribosomes from messenger RNA at the termination of protein biosynthesis. May increase the efficiency of translation by recycling ribosomes from one round of translation to another. The protein is Ribosome-recycling factor of Clostridium tetani (strain Massachusetts / E88).